Reading from the N-terminus, the 593-residue chain is Developmental and secondary metabolism regulator VEL1 (593 aa).

Polar residues predominate over residues 1–16 (MSNIVVSNETKSQSVR). The interval 1-21 (MSNIVVSNETKSQSVRTTKDG) is disordered. The region spanning 21-212 (GRQIRYNLQV…AEQGCRVRIR (192 aa)) is the Velvet domain. The Nuclear localization signal motif lies at 35–40 (ERARAC). The interval 218–569 (RRRENKSSKE…PGSPDMEEPM (352 aa)) is disordered. The segment covering 310–326 (PSYGSNQPQYSQQYQTP) has biased composition (low complexity). Residues 327-340 (QPAPMMQPPQPPQH) are compositionally biased toward pro residues. Composition is skewed to low complexity over residues 341 to 360 (STPYSQHSQHSSYSSQHQAQ) and 367 to 389 (QQYGYSNYQQQPQQPQSQSQPQY). Polar residues-rich tracts occupy residues 413-429 (SSITQSPAQQYTASSHP) and 440-449 (GRSQQMSQPL). The interval 443 to 487 (QQMSQPLHSSPQSYASSAPSHQSLPSLRPIVADKLEPVSPSYQSP) is PEST. Low complexity predominate over residues 450–465 (HSSPQSYASSAPSHQS). Composition is skewed to polar residues over residues 482 to 505 (PSYQSPPTSMSAAISVNSDGSNQH) and 512 to 534 (NPQTQGLPPMSATSNKRSFSSTF).

It belongs to the velvet family. VeA subfamily. In terms of assembly, component of the heterotrimeric velvet complex composed of LAE1, VEL1 and VEL2; VEL1 acting as a bridging protein between LAE1 and VEL2.

It is found in the nucleus. It localises to the cytoplasm. Functionally, component of the velvet transcription factor complex that controls sexual/asexual developmental ratio in response to light, promoting sexual development in the darkness while stimulating asexual sporulation under illumination. The velvet complex acts as a global regulator for secondary metabolite gene expression. Controls the expression of the T-toxin gene cluster. Promotes oxidative stress tolerance and acts as a virulence factors during infection. Negatively regulate mycelial pigmentation and controls sexual development, as well as asexual development during vegetative growth. This chain is Developmental and secondary metabolism regulator VEL1, found in Cochliobolus heterostrophus (strain C5 / ATCC 48332 / race O) (Southern corn leaf blight fungus).